Consider the following 262-residue polypeptide: Mlc titration factor A (262 aa).

Histidine 111, histidine 148, histidine 152, and glutamate 211 together coordinate Zn(2+).

This sequence belongs to the MtfA family. In terms of assembly, interacts with Mlc. It depends on Zn(2+) as a cofactor.

Its subcellular location is the cytoplasm. In terms of biological role, involved in the modulation of the activity of the glucose-phosphotransferase system (glucose-PTS). Interacts with the transcriptional repressor Mlc, preventing its interaction with DNA and leading to the modulation of expression of genes regulated by Mlc, including ptsG, which encodes the PTS system glucose-specific EIICB component. Shows zinc-dependent metallopeptidase activity. The protein is Mlc titration factor A of Serratia proteamaculans (strain 568).